Reading from the N-terminus, the 342-residue chain is Ribosomal RNA small subunit methyltransferase H (342 aa).

Residues 43 to 45, D61, F87, D108, and Q115 each bind S-adenosyl-L-methionine; that span reads GGY. Positions 322–342 are disordered; it reads ALDEASDGMNLPPLAELEKSR.

It belongs to the methyltransferase superfamily. RsmH family.

The protein localises to the cytoplasm. The enzyme catalyses cytidine(1402) in 16S rRNA + S-adenosyl-L-methionine = N(4)-methylcytidine(1402) in 16S rRNA + S-adenosyl-L-homocysteine + H(+). Functionally, specifically methylates the N4 position of cytidine in position 1402 (C1402) of 16S rRNA. This Hyphomonas neptunium (strain ATCC 15444) protein is Ribosomal RNA small subunit methyltransferase H.